Here is a 473-residue protein sequence, read N- to C-terminus: Fumarate hydratase class II (473 aa).

Substrate is bound by residues 105–107 (SGT), 130–133 (HPND), 140–142 (SSN), and threonine 188. Histidine 189 serves as the catalytic Proton donor/acceptor. Serine 319 is a catalytic residue. Substrate is bound by residues serine 320 and 325–327 (KVN).

Belongs to the class-II fumarase/aspartase family. Fumarase subfamily. In terms of assembly, homotetramer.

Its subcellular location is the cytoplasm. The catalysed reaction is (S)-malate = fumarate + H2O. It functions in the pathway carbohydrate metabolism; tricarboxylic acid cycle; (S)-malate from fumarate: step 1/1. Functionally, involved in the TCA cycle. Catalyzes the stereospecific interconversion of fumarate to L-malate. The protein is Fumarate hydratase class II of Xylella fastidiosa (strain Temecula1 / ATCC 700964).